Reading from the N-terminus, the 548-residue chain is uncharacterized protein (548 aa).

Short-chain dehydrogenase/reductase stretches follow at residues 1-250 and 271-548; these read MDDR…WMSV and PVED…LLSP. 12 to 37 lines the NADP(+) pocket; that stretch reads IVVTGAAGGIGRALVDIFAANGDVVV. A substrate-binding site is contributed by serine 141. Tyrosine 154 (proton acceptor) is an active-site residue. 280–304 is an NADP(+) binding site; the sequence is VIVMGGATGVGAAIARRFAENGDTV. Tyrosine 420 (proton acceptor) is an active-site residue.

The protein belongs to the short-chain dehydrogenases/reductases (SDR) family.

This is an uncharacterized protein from Sinorhizobium fredii (strain NBRC 101917 / NGR234).